The chain runs to 453 residues: CBL-interacting protein kinase 24 (453 aa).

The 254-residue stretch at 18 to 271 (YEVGRTIGQG…IEQIREDTWF (254 aa)) folds into the Protein kinase domain. Residues 24–32 (IGQGTFAKV) and lysine 47 each bind ATP. The Proton acceptor role is filled by aspartate 141. An activation loop region spans residues 159-186 (DFGLSTLAQKGVGLLHTTCGTPNYVAPE). In terms of domain architecture, NAF spans 310-336 (NDGGPLVMNAFEMITLSQGLDLSALFD). The segment at 343-372 (KRQTRFVSRKPAKTIVATIEVVAETMGLKV) is PPI.

The protein belongs to the protein kinase superfamily. CAMK Ser/Thr protein kinase family. SNF1 subfamily. Interacts with CBL4. The cofactor is Mn(2+).

The catalysed reaction is L-seryl-[protein] + ATP = O-phospho-L-seryl-[protein] + ADP + H(+). It catalyses the reaction L-threonyl-[protein] + ATP = O-phospho-L-threonyl-[protein] + ADP + H(+). In terms of biological role, involved in the regulatory pathway for the control of intracellular Na(+) and K(+) homeostasis and salt tolerance. Operates in synergy with CBL4 to activate the plasma membrane Na(+)/H(+) antiporter SOS1. CIPK serine-threonine protein kinases interact with CBL proteins. Binding of a CBL protein to the regulatory NAF domain of CIPK protein lead to the activation of the kinase in a calcium-dependent manner. The sequence is that of CBL-interacting protein kinase 24 (CIPK24) from Oryza sativa subsp. japonica (Rice).